The following is a 426-amino-acid chain: Elongation factor 1-alpha (426 aa).

Residues 5-221 form the tr-type G domain; that stretch reads KPHINLAVIG…NALKEPEKPT (217 aa). The tract at residues 14–21 is G1; it reads GHIDHGKS. A GTP-binding site is contributed by 14–21; that stretch reads GHIDHGKS. Residue serine 21 coordinates Mg(2+). The interval 70 to 74 is G2; sequence GITID. A G3 region spans residues 91–94; it reads DCPG. GTP-binding positions include 91 to 95 and 146 to 149; these read DCPGH and NKMD. Residues 146-149 form a G4 region; that stretch reads NKMD. Residues 185-187 are G5; sequence SAF.

This sequence belongs to the TRAFAC class translation factor GTPase superfamily. Classic translation factor GTPase family. EF-Tu/EF-1A subfamily.

Its subcellular location is the cytoplasm. It carries out the reaction GTP + H2O = GDP + phosphate + H(+). Functionally, GTP hydrolase that promotes the GTP-dependent binding of aminoacyl-tRNA to the A-site of ribosomes during protein biosynthesis. The protein is Elongation factor 1-alpha of Methanocella arvoryzae (strain DSM 22066 / NBRC 105507 / MRE50).